The following is a 407-amino-acid chain: Zinc finger protein 260 (407 aa).

Disordered stretches follow at residues 1–21 (MLES…PGES), 39–72 (VEHK…HLRS), and 96–124 (SHQK…RNQR). The segment at 23 to 45 (YECNECKETFSLEQNFVEHKKTH) adopts a C2H2-type 1 zinc-finger fold. 2 stretches are compositionally biased toward basic and acidic residues: residues 39–51 (VEHK…EKSP) and 100–111 (QHTEERPSESKK). The C2H2-type 2; degenerate zinc-finger motif lies at 51–73 (PECTGCGEESSQASSLTLHLRSR). The C2H2-type 3 zinc-finger motif lies at 79-101 (YKCGECGKAFSQRGNFLSHQKQH). Over residues 115 to 124 (PMTTTVRNQR) the composition is skewed to polar residues. C2H2-type zinc fingers lie at residues 131–153 (YACK…EKIH), 159–181 (FECS…QNIH), 187–209 (FKCN…QRIH), 215–237 (YECK…QRSH), 243–265 (YTCK…EKIH), 271–293 (YKCN…HNIH), 299–321 (YECN…VRIH), 327–349 (YECK…MRSH), 355–377 (YGCN…MRIH), and 383–405 (YQCS…QRIH).

Belongs to the krueppel C2H2-type zinc-finger protein family. As to quaternary structure, binds DNA. Interacts with GATA4. In terms of tissue distribution, predominantly present in heart. Outside the heart, it is detected in embryonic and postnatal vascular smooth muscle cells and in epithelial cells of the lung, gut and kidney at sites of epithelial morphogenesis and in the spinal cord (at protein level).

It localises to the nucleus. In terms of biological role, transcription factor that acts as a cardiac regulator and an effector of alpha1-adrenergic signaling. Binds to PE response elements (PERE) present in the promoter of genes such as ANF/NPPA and acts as a direct transcriptional activator of NPPA. Also acts as a cofactor with GATA4, a key cardiac regulator. This chain is Zinc finger protein 260 (Znf260), found in Mus musculus (Mouse).